The sequence spans 184 residues: Photosystem I assembly protein Ycf4 (184 aa).

2 consecutive transmembrane segments (helical) span residues 25 to 45 (ACILFFGSLGFFLVGISSYLG) and 57 to 77 (ILFVPQGIVMCFYGIAGLFIS).

It belongs to the Ycf4 family.

The protein localises to the plastid. It localises to the chloroplast thylakoid membrane. Seems to be required for the assembly of the photosystem I complex. In Cycas taitungensis (Prince sago), this protein is Photosystem I assembly protein Ycf4.